Reading from the N-terminus, the 1232-residue chain is Histone-lysine N-methyltransferase MECOM (1232 aa).

Residues 22 to 68 (PEIPLEEMPDADADGITSVPSLHIQEPCSPATSSESFTPKEGSPYKA) form a disordered region. The span at 25 to 34 (PLEEMPDADA) shows a compositional bias: acidic residues. Residues 80–192 (DEFELRESTM…PGEELLLFMK (113 aa)) form the SET domain. Residues K101 and K192 each participate in a glycyl lysine isopeptide (Lys-Gly) (interchain with G-Cter in SUMO2) cross-link. The interaction with SUV39H1 and probably MAPK9 and SMAD3 stretch occupies residues 191-442 (MKSEEDPHEP…NHFAAGGFFG (252 aa)). 5 consecutive C2H2-type zinc fingers follow at residues 211–238 (HRCE…STPH), 265–287 (QDCK…MLSH), 293–315 (YKCD…QMSH), 321–344 (YECE…RSQH), and 350–372 (HACP…KHIH). A Glycyl lysine isopeptide (Lys-Gly) (interchain with G-Cter in SUMO2) cross-link involves residue K294. Residues K369 and K376 each participate in a glycyl lysine isopeptide (Lys-Gly) (interchain with G-Cter in SUMO2) cross-link. The C2H2-type 6 zinc-finger motif lies at 378–400 (FICEVCHKSYTQFSNLCRHKRMH). The C2H2-type 7; atypical zinc-finger motif lies at 407–429 (IKCKDCGQMFSTTSSLNKHRRFC). Glycyl lysine isopeptide (Lys-Gly) (interchain with G-Cter in SUMO2) cross-links involve residues K432, K525, K545, K549, and K557. The tract at residues 548–622 (SKHPPVGDNK…KCKENGKMFK (75 aa)) is disordered. Basic and acidic residues predominate over residues 562–577 (LPERSSEERPLEKISD). Positions 588–600 (STPSGSDLETTSG) are enriched in polar residues. Basic and acidic residues predominate over residues 608-622 (ESDKEKCKENGKMFK). Positions 611-624 (KEKCKENGKMFKDK) match the Nuclear localization signal motif. K624 participates in a covalent cross-link: Glycyl lysine isopeptide (Lys-Gly) (interchain with G-Cter in SUMO2). The residue at position 626 (S626) is a Phosphoserine. Glycyl lysine isopeptide (Lys-Gly) (interchain with G-Cter in SUMO2) cross-links involve residues K637, K665, K687, and K723. Residues 720–823 (LPLKMEPQSP…DGSLQHARPT (104 aa)) are disordered. Phosphoserine is present on S728. Residues K733, K734, and K737 each participate in a glycyl lysine isopeptide (Lys-Gly) (interchain with G-Cter in SUMO2) cross-link. Phosphoserine is present on S742. The short motif at 743–747 (PFDLT) is the CTBP-binding motif 1 element. Glycyl lysine isopeptide (Lys-Gly) (interchain with G-Cter in SUMO2) cross-links involve residues K751, K754, and K762. The segment covering 758–773 (SGPSKPSGTPATSQDQ) has biased composition (polar residues). The CTBP-binding motif 2 signature appears at 774 to 778 (PLDLS). Glycyl lysine isopeptide (Lys-Gly) (interchain with G-Cter in SUMO2) cross-links involve residues K789, K802, and K803. A compositionally biased stretch (basic and acidic residues) spans 791-805 (TEPRKNHVFGEKKGS). The span at 806–816 (NMDTRPSSDGS) shows a compositional bias: polar residues. Glycyl lysine isopeptide (Lys-Gly) (interchain with G-Cter in SUMO2) cross-links involve residues K837, K846, K848, and K879. 3 C2H2-type zinc fingers span residues 914–936 (YTCR…LRTH), 942–965 (YRCK…RNIH), and 971–993 (FKCH…LKKH). K1020 participates in a covalent cross-link: Glycyl lysine isopeptide (Lys-Gly) (interchain with G-Cter in SUMO2). A compositionally biased stretch (polar residues) spans 1032–1043 (IGNSNHGSQSPR). Residues 1032–1107 (IGNSNHGSQS…GVTRLDEEIP (76 aa)) are disordered. A phosphoserine mark is found at S1039 and S1041. Residues 1044–1059 (NMEERMNGSHFKDKKA) are compositionally biased toward basic and acidic residues. Residues K1055 and K1058 each participate in a glycyl lysine isopeptide (Lys-Gly) (interchain with G-Cter in SUMO2) cross-link. The span at 1068–1088 (LLDDEEVEDEVLLDEEDEDND) shows a compositional bias: acidic residues. Residues 1089 to 1104 (IPGKPRKELGVTRLDE) are compositionally biased toward basic and acidic residues. Residues K1122, K1129, K1134, K1151, K1178, and K1186 each participate in a glycyl lysine isopeptide (Lys-Gly) (interchain with G-Cter in SUMO2) cross-link.

Homooligomer. Interacts with CTBP1. Interacts with SMAD3 (via MH2 domain); the interaction is direct. Interacts with SMAD4; through interaction with SMAD3. Interacts with CREBBP, KAT2B and histone deacetylases. Interacts with MAPK8 and MAPK9; inhibits JNK signaling. Interacts with SUV39H1 (via SET domain); enhances MECOM transcriptional repression activity. May be acetylated by CREBBP and KAT2B.

It localises to the nucleus. It is found in the nucleus speckle. The protein localises to the cytoplasm. The catalysed reaction is L-lysyl(9)-[histone H3] + S-adenosyl-L-methionine = N(6)-methyl-L-lysyl(9)-[histone H3] + S-adenosyl-L-homocysteine + H(+). Its function is as follows. Functions as a transcriptional regulator binding to DNA sequences in the promoter region of target genes and regulating positively or negatively their expression. Oncogene which plays a role in development, cell proliferation and differentiation. May also play a role in apoptosis through regulation of the JNK and TGF-beta signaling. Involved in hematopoiesis. Functionally, displays histone methyltransferase activity and monomethylates 'Lys-9' of histone H3 (H3K9me1) in vitro. Probably catalyzes the monomethylation of free histone H3 in the cytoplasm which is then transported to the nucleus and incorporated into nucleosomes where SUV39H methyltransferases use it as a substrate to catalyze histone H3 'Lys-9' trimethylation. Likely to be one of the primary histone methyltransferases along with PRDM16 that direct cytoplasmic H3K9me1 methylation. This chain is Histone-lysine N-methyltransferase MECOM, found in Mus musculus (Mouse).